The chain runs to 248 residues: Probable proteasome subunit alpha type-3 (248 aa).

The protein belongs to the peptidase T1A family. In terms of assembly, the 26S proteasome consists of a 20S proteasome core and two 19S regulatory subunits. The 20S proteasome core is composed of 28 subunits that are arranged in four stacked rings, resulting in a barrel-shaped structure. The two end rings are each formed by seven alpha subunits, and the two central rings are each formed by seven beta subunits. The catalytic chamber with the active sites is on the inside of the barrel.

It is found in the cytoplasm. Its subcellular location is the nucleus. Its function is as follows. The proteasome is a multicatalytic proteinase complex which is characterized by its ability to cleave peptides with Arg, Phe, Tyr, Leu, and Glu adjacent to the leaving group at neutral or slightly basic pH. The proteasome has an ATP-dependent proteolytic activity. The sequence is that of Probable proteasome subunit alpha type-3 from Schizosaccharomyces pombe (strain 972 / ATCC 24843) (Fission yeast).